Here is a 263-residue protein sequence, read N- to C-terminus: 5'-nucleotidase SurE (263 aa).

Positions 8, 9, 40, and 98 each coordinate a divalent metal cation.

This sequence belongs to the SurE nucleotidase family. It depends on a divalent metal cation as a cofactor.

It localises to the cytoplasm. It carries out the reaction a ribonucleoside 5'-phosphate + H2O = a ribonucleoside + phosphate. In terms of biological role, nucleotidase that shows phosphatase activity on nucleoside 5'-monophosphates. The protein is 5'-nucleotidase SurE of Gloeobacter violaceus (strain ATCC 29082 / PCC 7421).